A 541-amino-acid polypeptide reads, in one-letter code: Tetratricopeptide repeat protein 8 (541 aa).

The TPR 1 repeat unit spans residues 14-47 (YFRRRKFQLCADLCTQMLEKSPYDQEPDPELPVH). A disordered region spans residues 118 to 137 (PITGFLRPSTQSGRPGTMEQ). 7 TPR repeats span residues 251–284 (WWWK…QEMV), 285–317 (DTFL…FPGE), 318–351 (VTLL…DNTH), 352–385 (VEAI…GIYN), 386–419 (GQLF…AENE), 423–456 (ADVW…NNNH), and 457–490 (AEAY…APHM).

Part of BBSome complex, that contains BBS1, BBS2, BBS4, BBS5, BBS7, BBS8/TTC8, BBS9 and BBIP10. Interacts with PCM1. Interacts with CCDC28B. Interacts with PKD1. In terms of tissue distribution, widely expressed.

The protein resides in the cytoplasm. Its subcellular location is the cytoskeleton. It is found in the microtubule organizing center. It localises to the centrosome. The protein localises to the cell projection. The protein resides in the cilium membrane. Its subcellular location is the centriolar satellite. It is found in the cilium. The BBSome complex is thought to function as a coat complex required for sorting of specific membrane proteins to the primary cilia. The BBSome complex is required for ciliogenesis but is dispensable for centriolar satellite function. This ciliogenic function is mediated in part by the Rab8 GDP/GTP exchange factor, which localizes to the basal body and contacts the BBSome. Rab8(GTP) enters the primary cilium and promotes extension of the ciliary membrane. Firstly the BBSome associates with the ciliary membrane and binds to RAB3IP/Rabin8, the guanosyl exchange factor (GEF) for Rab8 and then the Rab8-GTP localizes to the cilium and promotes docking and fusion of carrier vesicles to the base of the ciliary membrane. The BBSome complex, together with the LTZL1, controls SMO ciliary trafficking and contributes to the sonic hedgehog (SHH) pathway regulation. Required for proper BBSome complex assembly and its ciliary localization. In Homo sapiens (Human), this protein is Tetratricopeptide repeat protein 8 (TTC8).